We begin with the raw amino-acid sequence, 113 residues long: U11-theraphotoxin-Hhn1a (113 aa).

The first 21 residues, 1–21, serve as a signal peptide directing secretion; sequence MNTVRVTFLLVFVLAVSLGQA. A propeptide spanning residues 22 to 74 is cleaved from the precursor; that stretch reads DKDENRMEVQEKTEQGKSYLDFAENLLLQKLEELEAKLLEEDSEESRNSRQKR. The disordered stretch occupies residues 61–83; it reads EEDSEESRNSRQKRCIGEGVPCD. Cystine bridges form between C75–C90, C82–C95, and C89–C110.

The protein belongs to the neurotoxin 14 (magi-1) family. 01 (HNTX-16) subfamily. As to expression, expressed by the venom gland.

It localises to the secreted. Its function is as follows. Probable ion channel inhibitor. The polypeptide is U11-theraphotoxin-Hhn1a (Cyriopagopus hainanus (Chinese bird spider)).